A 211-amino-acid polypeptide reads, in one-letter code: Small ribosomal subunit protein uS3 (211 aa).

The KH type-2 domain occupies 39-107; it reads VTKYVESSFA…VPSLNVVEVK (69 aa).

Belongs to the universal ribosomal protein uS3 family. As to quaternary structure, part of the 30S ribosomal subunit. Forms a tight complex with proteins S10 and S14.

In terms of biological role, binds the lower part of the 30S subunit head. Binds mRNA in the 70S ribosome, positioning it for translation. This is Small ribosomal subunit protein uS3 from Neorickettsia sennetsu (strain ATCC VR-367 / Miyayama) (Ehrlichia sennetsu).